The primary structure comprises 171 residues: AN1-type zinc finger protein 2A (171 aa).

2 AN1-type zinc fingers span residues 4–52 (PDLG…KKDV) and 94–142 (KVFT…SSVS). Zn(2+)-binding residues include cysteine 10, cysteine 15, cysteine 25, cysteine 28, cysteine 33, histidine 36, histidine 42, cysteine 44, cysteine 100, cysteine 105, cysteine 115, cysteine 118, cysteine 123, histidine 126, histidine 132, and cysteine 134. The disordered stretch occupies residues 135 to 171 (QAGSSSVSRGRSSASRAAEQKPSGVSWLAQRLRRTVK). Positions 136–151 (AGSSSVSRGRSSASRA) are enriched in low complexity.

It localises to the cytoplasm. The protein localises to the nucleus. The protein is AN1-type zinc finger protein 2A (Zfand2a) of Rattus norvegicus (Rat).